Consider the following 923-residue polypeptide: Smoothelin (923 aa).

Alanine 2 carries the post-translational modification N-acetylalanine. The stretch at 24–89 (LAERRRIRSA…ARLAGRLESM (66 aa)) forms a coiled coil. The disordered stretch occupies residues 134–456 (SRLPSSGPRE…GTGEPGGSMK (323 aa)). Low complexity-rich tracts occupy residues 164 to 179 (QEQQ…TPED) and 192 to 205 (RAPP…PASP). The span at 237-252 (LPHPSEAPSPEPPMSP) shows a compositional bias: pro residues. Composition is skewed to polar residues over residues 272 to 285 (PSDT…FSNT) and 293 to 314 (TKSC…NREP). Residues serine 299, serine 301, serine 304, and serine 340 each carry the phosphoserine modification. Residues threonine 359 and threonine 372 each carry the phosphothreonine modification. The span at 366–389 (PSLISTTPASSSSSNSSSPSPSDT) shows a compositional bias: low complexity. Phosphoserine occurs at positions 501, 521, and 574. Disordered stretches follow at residues 542-578 (KMEP…PLSA) and 615-772 (QRKR…ARKA). Positions 601–628 (EERKLIRAALRELRQRKRDQRDKERERR) form a coiled coil. A compositionally biased stretch (basic and acidic residues) spans 615–638 (QRKRDQRDKERERRLREARARPGE). At serine 641 the chain carries Phosphoserine. The segment covering 674–687 (NDGTQTARTTTVES) has biased composition (polar residues). Residues 697–721 (SSSSSTTTTTVQTKSFSSSSSSSSS) show a composition bias toward low complexity. Phosphoserine is present on serine 735. The span at 744 to 756 (LERRQAEKKKELM) shows a compositional bias: basic and acidic residues. Residue serine 798 is modified to Phosphoserine. One can recognise a Calponin-homology (CH) domain in the interval 805 to 912 (NSIKQMLLDW…YVQSLYNHLR (108 aa)).

This sequence belongs to the smoothelin family.

The protein resides in the cytoplasm. It localises to the cytoskeleton. In terms of biological role, structural protein of the cytoskeleton. The polypeptide is Smoothelin (Smtn) (Mus musculus (Mouse)).